We begin with the raw amino-acid sequence, 356 residues long: Icosanoyl-CoA 5-desaturase (356 aa).

The chain crosses the membrane as a helical span at residues 5–25 (LYFPISISLSLSLEAMASFIA). The disordered stretch occupies residues 38 to 58 (LDPKIPTKPEPKTETPKPKDD). The segment covering 42-58 (IPTKPEPKTETPKPKDD) has biased composition (basic and acidic residues). 2 helical membrane passes run 88–108 (NAVT…YFSW) and 111–131 (FWIS…TLCF). Positions 132–137 (HRCLTH) match the Histidine box-1 motif. The Histidine box-2 signature appears at 169–173 (HRYHH). Residues 236–256 (ALIALLYYVGGFPYIVWGMGF) traverse the membrane as a helical segment. Positions 302 to 306 (HNNHH) match the Histidine box-3 motif.

It belongs to the fatty acid desaturase type 1 family. It depends on Fe(2+) as a cofactor.

The protein resides in the membrane. It carries out the reaction eicosanoyl-CoA + 2 Fe(II)-[cytochrome b5] + O2 + 2 H(+) = (5Z)-eicosenoyl-CoA + 2 Fe(III)-[cytochrome b5] + 2 H2O. The protein operates within lipid metabolism; monounsaturated fatty acid biosynthesis. In terms of biological role, desaturase involved in the biosynthesis of (5Z)-icos-5-enoate, an unusual monounsaturated fatty acid that makes up to 60% of the total fatty acids in Limnanthes sp. seed oil. Only acts on saturated fatty acids. This is Icosanoyl-CoA 5-desaturase from Limnanthes douglasii (Douglas' meadowfoam).